The following is a 944-amino-acid chain: UvrABC system protein A (944 aa).

33-40 (GLSGSGKS) serves as a coordination point for ATP. The segment at 252 to 279 (CPICGFSIGELEPRMFSFNSPFGACPTC) adopts a C4-type zinc-finger fold. 2 consecutive ABC transporter domains span residues 309–587 (WEPT…KKSL) and 607–935 (ITDR…QYLK). Position 639-646 (639-646 (GVSGSGKS)) interacts with ATP. A C4-type zinc finger spans residues 738–764 (CEACKGDGIIKIEMHFLPDVYVPCEVC).

This sequence belongs to the ABC transporter superfamily. UvrA family. As to quaternary structure, forms a heterotetramer with UvrB during the search for lesions.

The protein localises to the cytoplasm. In terms of biological role, the UvrABC repair system catalyzes the recognition and processing of DNA lesions. UvrA is an ATPase and a DNA-binding protein. A damage recognition complex composed of 2 UvrA and 2 UvrB subunits scans DNA for abnormalities. When the presence of a lesion has been verified by UvrB, the UvrA molecules dissociate. The sequence is that of UvrABC system protein A from Staphylococcus epidermidis (strain ATCC 12228 / FDA PCI 1200).